The following is a 401-amino-acid chain: tRNA (guanine-N(7)-)-methyltransferase non-catalytic subunit wuho (401 aa).

Residues 45 to 85 (KGRPRKYFDADSDSDEEQQNGDEPGTGKNNGGGDTGKKDQD) are disordered. A compositionally biased stretch (acidic residues) spans 54-64 (ADSDSDEEQQN). WD repeat units follow at residues 86–125 (DQTN…RTLK), 174–213 (GHMS…NIET), and 217–255 (GHTE…ELAR).

It belongs to the WD repeat TRM82 family. As to quaternary structure, forms a heterodimer with the catalytic subunit.

The protein localises to the nucleus. It participates in tRNA modification; N(7)-methylguanine-tRNA biosynthesis. Its function is as follows. Required for the formation of N(7)-methylguanine at position 46 (m7G46) in tRNA. In the complex, it is required to stabilize and induce conformational changes of the catalytic subunit. The polypeptide is tRNA (guanine-N(7)-)-methyltransferase non-catalytic subunit wuho (Culex quinquefasciatus (Southern house mosquito)).